Reading from the N-terminus, the 334-residue chain is Aspartate carbamoyltransferase catalytic subunit (334 aa).

R71 and T72 together coordinate carbamoyl phosphate. K99 is a binding site for L-aspartate. Residues R121, H151, and Q154 each coordinate carbamoyl phosphate. R184 and R239 together coordinate L-aspartate. 2 residues coordinate carbamoyl phosphate: G280 and P281.

The protein belongs to the aspartate/ornithine carbamoyltransferase superfamily. ATCase family. Heterododecamer (2C3:3R2) of six catalytic PyrB chains organized as two trimers (C3), and six regulatory PyrI chains organized as three dimers (R2).

It carries out the reaction carbamoyl phosphate + L-aspartate = N-carbamoyl-L-aspartate + phosphate + H(+). The protein operates within pyrimidine metabolism; UMP biosynthesis via de novo pathway; (S)-dihydroorotate from bicarbonate: step 2/3. In terms of biological role, catalyzes the condensation of carbamoyl phosphate and aspartate to form carbamoyl aspartate and inorganic phosphate, the committed step in the de novo pyrimidine nucleotide biosynthesis pathway. This is Aspartate carbamoyltransferase catalytic subunit from Pseudomonas fluorescens (strain ATCC BAA-477 / NRRL B-23932 / Pf-5).